The following is a 258-amino-acid chain: uncharacterized protein (258 aa).

36 to 43 (GKAGTGKS) provides a ligand contact to ATP.

It belongs to the IIV-6 075L family.

This is an uncharacterized protein from Acheta domesticus (House cricket).